Consider the following 510-residue polypeptide: Histidine ammonia-lyase (510 aa).

Positions 143-145 form a cross-link, 5-imidazolinone (Ala-Gly); it reads ASG. A 2,3-didehydroalanine (Ser) modification is found at Ser144.

Belongs to the PAL/histidase family. Post-translationally, contains an active site 4-methylidene-imidazol-5-one (MIO), which is formed autocatalytically by cyclization and dehydration of residues Ala-Ser-Gly.

Its subcellular location is the cytoplasm. It catalyses the reaction L-histidine = trans-urocanate + NH4(+). It functions in the pathway amino-acid degradation; L-histidine degradation into L-glutamate; N-formimidoyl-L-glutamate from L-histidine: step 1/3. The protein is Histidine ammonia-lyase of Shewanella woodyi (strain ATCC 51908 / MS32).